A 414-amino-acid chain; its full sequence is Proton/glutamate-aspartate symporter (414 aa).

The Cytoplasmic portion of the chain corresponds to 1-3; the sequence is MKK. Residues 4–24 traverse the membrane as a helical segment; it reads LIAFQILIALAVGAVIGHFFP. Topologically, residues 25–42 are extracellular; the sequence is DFGMALRPVGDGFIRLIK. Residues 43–63 traverse the membrane as a helical segment; it reads MIVVPIVFSTIVIGAAGSGSM. Over 64–73 the chain is Cytoplasmic; that stretch reads KKMGSLGIKT. A helical transmembrane segment spans residues 74–94; sequence IIWFEVITTLVLGLGLLLANV. The Extracellular portion of the chain corresponds to 95–144; the sequence is LKPGVGLDLSHLAKKDIHELSGYTDKVVDFKQMILDIIPTNIIDVMARND. The helical transmembrane segment at 145 to 165 threads the bilayer; that stretch reads LLAVIFFAILFGVAAAGIGKA. Residues 166-182 lie on the Cytoplasmic side of the membrane; it reads SEPVMKFFESTAQIMFK. Residues 183 to 203 traverse the membrane as a helical segment; sequence LTQIVMVTAPIGVLALMAASV. The Extracellular segment spans residues 204 to 219; that stretch reads GQYGIELLLPMFKLVG. The chain crosses the membrane as a helical span at residues 220-240; it reads TVFLGLFLILFVLFPLVGLIF. A topological domain (cytoplasmic) is located at residue glutamine 241. The helical transmembrane segment at 242–262 threads the bilayer; that stretch reads IKYFEVLKMIWDLFLIAFSTT. At 263 to 300 the chain is on the extracellular side; sequence STETILPQLMDRMEKYGCPKRVVSFVVPSGLSLNCDGS. A helical membrane pass occupies residues 301 to 321; that stretch reads SLYLSVSCIFLAQAFQVDMTL. The Cytoplasmic portion of the chain corresponds to 322-324; that stretch reads SQQ. 2 helical membrane-spanning segments follow: residues 325–345 and 346–366; these read LLMM…PSGS and LVVL…VAII. At 367–414 the chain is on the cytoplasmic side; it reads AGVDRVMDMARTGVNVPGHAIACIVVSKWEKAFRQKEWVSANSQTESI.

The protein belongs to the dicarboxylate/amino acid:cation symporter (DAACS) (TC 2.A.23) family.

The protein resides in the cell membrane. Its activity is regulated as follows. Glutamate uptake is inhibited by beta-hydroxyaspartate and cysteic acid. Catalyzes the proton-dependent, binding-protein-independent transport of glutamate and aspartate. In Bacillus subtilis (strain 168), this protein is Proton/glutamate-aspartate symporter.